The chain runs to 885 residues: MAGVNEIRSTFLDYFRKNGHEVVPSSPLVPRNDPTLMFTNAGMVQFKNVFTGLEHRSYNRATTSQKCVRAGGKHNDLDNVGYTARHHTFFEMLGNFSFGDYFKEDAISFAWNLITREFGLPKDKLLVTVYHTDDDAANFWKKIAGLSDDRIIRIPTSDNFWAMGDTGPCGPCSEIFYDHGDHIWGGPPGSPEEDGDRFIEIWNLVFMQFEQQTPELRIDLPRPSIDTGMGLERIAAVLQGVHDNYDIDLFKALIRASEEATGVKAEGDFRASHRVIADHLRASSFLIADGVLPSNEGRGYVLRRIMRRAMRHAQLLGAKEPLMWRLLPALIREMGQAYPELIRAESLISETLKLEETRFRKTLERGLGLLSDASENLAEGDRLDGETAFKLYDTYGFPLDLTQDALRQRGIAVDTEGFNVAMERQKAEARANWTGSGEAATETIWFGIKDKVGATEFLGYETESAEGVIASLVRDGVEVPSVREGETISVVVNQTPFYGESGGQQGDTGTISGEGFVIAVKDTQKKGEGVFVHIGEVTEGTAKAGDVVELKVDSARRTRIRSNHSATHLLHEALRETLGTHVAQKGSLVAPDRLRFDFSHPKPISAEELEAVENLANEIILQNAPVTTRLMAVDDAIAEGAMALFGEKYGDEVRVVSMGTAKHGSKAGKAYSVELCGGTHVRQTGDIGLVRIISEGGVAAGVRRLEALTGEAARLYLEEQDERVKAIASALKTTSADVLDHVNALIDERKKLERELADARKKLALGGGSSDGDSAVEAVNGVNFLGKIVTGVSPRDLKPLADEGKKQVGSGVVLFIGVGEDGKASAVAAVTEDMVGRFSAVDLVRAASAALGGAGGGGRPDMAQAGGPDGAKAADAIAAVKALIA.

Residues His564, His568, Cys676, and His680 each coordinate Zn(2+).

It belongs to the class-II aminoacyl-tRNA synthetase family. It depends on Zn(2+) as a cofactor.

The protein resides in the cytoplasm. The enzyme catalyses tRNA(Ala) + L-alanine + ATP = L-alanyl-tRNA(Ala) + AMP + diphosphate. Functionally, catalyzes the attachment of alanine to tRNA(Ala) in a two-step reaction: alanine is first activated by ATP to form Ala-AMP and then transferred to the acceptor end of tRNA(Ala). Also edits incorrectly charged Ser-tRNA(Ala) and Gly-tRNA(Ala) via its editing domain. The chain is Alanine--tRNA ligase from Brucella ovis (strain ATCC 25840 / 63/290 / NCTC 10512).